A 346-amino-acid chain; its full sequence is Homeobox protein ceh-22 (346 aa).

Disordered stretches follow at residues 1 to 68 (MFNV…QSAL) and 135 to 190 (LPDQ…RKKR). Positions 9–24 (AATPSIASVSSVASPS) are enriched in low complexity. The segment covering 25–44 (EQHGLSTSVGVGVNDTTSRT) has biased composition (polar residues). Low complexity predominate over residues 49 to 67 (AASSASSASAAPQQQSQSA). Polar residues predominate over residues 147-156 (LDNSNTSNGN). Acidic residues predominate over residues 166–182 (EDEDEILEDEENDEEDD). The homeobox DNA-binding region spans 189 to 248 (KRKRRVLFTKAQTYELERRFRSQKYLSAPEREALAMQIRLTPTQVKIWFQNHRYKTKKSH).

The protein belongs to the NK-2 homeobox family.

Its subcellular location is the nucleus. Its function is as follows. Involved in combinatorial activation of gene expression in pharyngeal muscle. Specifically binds a site necessary for activity of the B subelement of myo-2 enhancer. Functionally, regulates distal tip cell fate. The sequence is that of Homeobox protein ceh-22 (ceh-22) from Caenorhabditis elegans.